We begin with the raw amino-acid sequence, 736 residues long: Prolyl oligopeptidase dbiP (736 aa).

Active-site charge relay system residues include Ser572, Asp656, and His692.

The protein belongs to the peptidase S9A family. In terms of assembly, monomer.

It carries out the reaction Hydrolysis of Pro-|-Xaa &gt;&gt; Ala-|-Xaa in oligopeptides.. It functions in the pathway mycotoxin biosynthesis. Functionally, prolyl oligopeptidase; part of the gene cluster that mediates the biosynthesis of dendrothelin A, a highly methylated cyclic dodecapeptide showing slight nematodicidal activity. Excises and catalyzes the macrocyclization of the methylated core peptide of dbiMA to yield dendrothelin A. DbiP works in a two-step fashion with an initial cleavage at the N-terminus, followed by a second cleavage at the C-terminus of the core peptide. According to this mechanism, the free N-terminus of the core peptide, generated by the first cleavage, attacks the covalent intermediate of the second cleavage, which results in macrocyclization of the core peptide. The polypeptide is Prolyl oligopeptidase dbiP (Dendrothele bispora (strain CBS 962.96)).